We begin with the raw amino-acid sequence, 734 residues long: Photosystem I P700 chlorophyll a apoprotein A2 (734 aa).

8 consecutive transmembrane segments (helical) span residues 46 to 69 (IFAS…FHVA), 135 to 158 (LYTG…LHLQ), 175 to 199 (LNHH…HVAI), 273 to 291 (IAHH…GHMY), 330 to 353 (LHFQ…QHMY), 369 to 395 (AALY…IFFI), 417 to 439 (AIIS…LYVH), and 517 to 535 (FLVH…LILV). Cys-559 and Cys-568 together coordinate [4Fe-4S] cluster. Transmembrane regions (helical) follow at residues 575–596 (AFYL…YWHW) and 643–665 (LSVW…MFLI). Chlorophyll a is bound by residues His-654, Met-662, and Tyr-670. Residue Trp-671 participates in phylloquinone binding. The chain crosses the membrane as a helical span at residues 707-727 (LVGLVHFSVGYIFTYAAFLIA).

It belongs to the PsaA/PsaB family. As to quaternary structure, the PsaA/B heterodimer binds the P700 chlorophyll special pair and subsequent electron acceptors. PSI consists of a core antenna complex that captures photons, and an electron transfer chain that converts photonic excitation into a charge separation. The eukaryotic PSI reaction center is composed of at least 11 subunits. It depends on P700 is a chlorophyll a/chlorophyll a' dimer, A0 is one or more chlorophyll a, A1 is one or both phylloquinones and FX is a shared 4Fe-4S iron-sulfur center. as a cofactor.

Its subcellular location is the plastid. It is found in the chloroplast thylakoid membrane. It catalyses the reaction reduced [plastocyanin] + hnu + oxidized [2Fe-2S]-[ferredoxin] = oxidized [plastocyanin] + reduced [2Fe-2S]-[ferredoxin]. PsaA and PsaB bind P700, the primary electron donor of photosystem I (PSI), as well as the electron acceptors A0, A1 and FX. PSI is a plastocyanin-ferredoxin oxidoreductase, converting photonic excitation into a charge separation, which transfers an electron from the donor P700 chlorophyll pair to the spectroscopically characterized acceptors A0, A1, FX, FA and FB in turn. Oxidized P700 is reduced on the lumenal side of the thylakoid membrane by plastocyanin. This chain is Photosystem I P700 chlorophyll a apoprotein A2, found in Nicotiana tomentosiformis (Tobacco).